A 244-amino-acid chain; its full sequence is Small ribosomal subunit protein uS2 (244 aa).

Belongs to the universal ribosomal protein uS2 family.

This is Small ribosomal subunit protein uS2 from Hydrogenovibrio crunogenus (strain DSM 25203 / XCL-2) (Thiomicrospira crunogena).